The sequence spans 426 residues: Serine--tRNA ligase (426 aa).

235-237 is a binding site for L-serine; it reads TAE. 266–268 contributes to the ATP binding site; sequence RRE. E289 is a binding site for L-serine. Position 353-356 (353-356) interacts with ATP; the sequence is EISS. S389 contacts L-serine.

Belongs to the class-II aminoacyl-tRNA synthetase family. Type-1 seryl-tRNA synthetase subfamily. As to quaternary structure, homodimer. The tRNA molecule binds across the dimer.

The protein localises to the cytoplasm. The enzyme catalyses tRNA(Ser) + L-serine + ATP = L-seryl-tRNA(Ser) + AMP + diphosphate + H(+). It catalyses the reaction tRNA(Sec) + L-serine + ATP = L-seryl-tRNA(Sec) + AMP + diphosphate + H(+). Its pathway is aminoacyl-tRNA biosynthesis; selenocysteinyl-tRNA(Sec) biosynthesis; L-seryl-tRNA(Sec) from L-serine and tRNA(Sec): step 1/1. Catalyzes the attachment of serine to tRNA(Ser). Is also able to aminoacylate tRNA(Sec) with serine, to form the misacylated tRNA L-seryl-tRNA(Sec), which will be further converted into selenocysteinyl-tRNA(Sec). The polypeptide is Serine--tRNA ligase (Nostoc punctiforme (strain ATCC 29133 / PCC 73102)).